The sequence spans 245 residues: Ribosomal RNA large subunit methyltransferase E (245 aa).

Residues glycine 58, tryptophan 60, aspartate 78, aspartate 96, and aspartate 123 each contribute to the S-adenosyl-L-methionine site. Lysine 163 serves as the catalytic Proton acceptor.

Belongs to the class I-like SAM-binding methyltransferase superfamily. RNA methyltransferase RlmE family.

The protein resides in the cytoplasm. It carries out the reaction uridine(2552) in 23S rRNA + S-adenosyl-L-methionine = 2'-O-methyluridine(2552) in 23S rRNA + S-adenosyl-L-homocysteine + H(+). Its function is as follows. Specifically methylates the uridine in position 2552 of 23S rRNA at the 2'-O position of the ribose in the fully assembled 50S ribosomal subunit. This is Ribosomal RNA large subunit methyltransferase E from Methanocaldococcus jannaschii (strain ATCC 43067 / DSM 2661 / JAL-1 / JCM 10045 / NBRC 100440) (Methanococcus jannaschii).